The chain runs to 147 residues: 3-dehydroquinate dehydratase (147 aa).

The active-site Proton acceptor is the tyrosine 23. Substrate-binding residues include asparagine 74, histidine 80, and aspartate 87. Histidine 100 functions as the Proton donor in the catalytic mechanism. Substrate-binding positions include 101–102 (LS) and arginine 111.

The protein belongs to the type-II 3-dehydroquinase family. In terms of assembly, homododecamer.

It carries out the reaction 3-dehydroquinate = 3-dehydroshikimate + H2O. It functions in the pathway metabolic intermediate biosynthesis; chorismate biosynthesis; chorismate from D-erythrose 4-phosphate and phosphoenolpyruvate: step 3/7. Catalyzes a trans-dehydration via an enolate intermediate. The protein is 3-dehydroquinate dehydratase of Clostridium botulinum (strain ATCC 19397 / Type A).